Consider the following 190-residue polypeptide: Isopentenyl-diphosphate Delta-isomerase (190 aa).

Mn(2+) contacts are provided by His-27 and His-34. The Nudix hydrolase domain maps to 32-171 (PLHFAFSSYI…PFVFSPWMVD (140 aa)). The active site involves Cys-69. Cys-69 contacts Mg(2+). His-71 serves as a coordination point for Mn(2+). Glu-89 is a binding site for Mg(2+). Mn(2+) is bound by residues Glu-119 and Glu-121. The active site involves Glu-121.

Belongs to the IPP isomerase type 1 family. The cofactor is Mg(2+). Mn(2+) serves as cofactor.

The protein resides in the cytoplasm. It catalyses the reaction isopentenyl diphosphate = dimethylallyl diphosphate. The protein operates within isoprenoid biosynthesis; dimethylallyl diphosphate biosynthesis; dimethylallyl diphosphate from isopentenyl diphosphate: step 1/1. In terms of biological role, catalyzes the 1,3-allylic rearrangement of the homoallylic substrate isopentenyl (IPP) to its highly electrophilic allylic isomer, dimethylallyl diphosphate (DMAPP). The polypeptide is Isopentenyl-diphosphate Delta-isomerase (Corynebacterium efficiens (strain DSM 44549 / YS-314 / AJ 12310 / JCM 11189 / NBRC 100395)).